Consider the following 317-residue polypeptide: MADNAQVVPVEEPAATATATATATATTEPEAKSSDQMESQSDNKPPMGTLMALVNILAAGVLPIFTFVLSLTLLGYAVWLLYMRSYDCEDILGLPRVQTLASVGLLAVFVVSNAALFLRRKFPMPALVVMVVVLLLMLFIGLAYAGVNEMQSRRFPATRMWFKLKIMDDHVTWNNIKSCVYDKGACNDLIYGSPNEKPYNRRKMPPIKNGCCMPPETCNMDAINATFWYRRKDEGPPSSMNLMYGDEMMVGRISDCQLWRNDWSILCYDCRSCKFGFIRSVRRKWWQLGIFLIVISILLLMSHLLIFLATFWERFKG.

Residues 1–43 (MADNAQVVPVEEPAATATATATATATTEPEAKSSDQMESQSDN) form a disordered region. At 1–60 (MADNAQVVPVEEPAATATATATATATTEPEAKSSDQMESQSDNKPPMGTLMALVNILAAG) the chain is on the cytoplasmic side. A compositionally biased stretch (low complexity) spans 7–28 (VVPVEEPAATATATATATATTE). The chain crosses the membrane as a helical span at residues 61 to 81 (VLPIFTFVLSLTLLGYAVWLL). Residues 82–96 (YMRSYDCEDILGLPR) lie on the Extracellular side of the membrane. A helical membrane pass occupies residues 97 to 117 (VQTLASVGLLAVFVVSNAALF). Residues 118 to 126 (LRRKFPMPA) lie on the Cytoplasmic side of the membrane. Residues 127–147 (LVVMVVVLLLMLFIGLAYAGV) traverse the membrane as a helical segment. Over 148-287 (NEMQSRRFPA…IRSVRRKWWQ (140 aa)) the chain is Extracellular. N-linked (GlcNAc...) asparagine glycosylation occurs at N224. Residues 288–308 (LGIFLIVISILLLMSHLLIFL) traverse the membrane as a helical segment. The Cytoplasmic segment spans residues 309–317 (ATFWERFKG).

It belongs to the tetraspanin (TM4SF) family.

The protein localises to the membrane. May be involved in the regulation of cell differentiation. In Arabidopsis thaliana (Mouse-ear cress), this protein is Tetraspanin-15 (TET15).